A 305-amino-acid polypeptide reads, in one-letter code: PI-PLC X domain-containing protein 1 (305 aa).

A signal peptide spans 1–24 (MSMSTLRHFLWLGALLLATIQVSA). One can recognise a PI-PLC X-box domain in the interval 25–189 (LPTAQDLICN…RLIVFVDSKA (165 aa)). Active-site residues include histidine 53 and histidine 97. N-linked (GlcNAc...) asparagine glycosylation is present at asparagine 237.

The protein resides in the secreted. This Arthroderma benhamiae (strain ATCC MYA-4681 / CBS 112371) (Trichophyton mentagrophytes) protein is PI-PLC X domain-containing protein 1.